The primary structure comprises 497 residues: Envelope glycoprotein E (497 aa).

Over 1 to 398 the chain is Virion surface; sequence MCVFQILIIV…GTIIYDILLT (398 aa). 7 N-linked (GlcNAc...) asparagine; by host glycosylation sites follow: Asn-60, Asn-133, Asn-148, Asn-203, Asn-277, Asn-366, and Asn-388. Residues 399 to 419 form a helical membrane-spanning segment; the sequence is SLSIGAIIIVIVGGVCIAILI. Residues 420 to 497 lie on the Intravirion side of the membrane; that stretch reads RRRRRRRTRG…KIRKRLDLYH (78 aa).

Belongs to the alphaherpesvirinae glycoprotein E family. As to quaternary structure, interacts with gI. Post-translationally, phosphorylated within the acidic cluster. Phosphorylation determines whether endocytosed viral gE traffics to the trans-Golgi network or recycles to the cell membrane.

It is found in the virion membrane. Its subcellular location is the host cell membrane. It localises to the host cell junction. The protein resides in the host Golgi apparatus membrane. The protein localises to the host endosome membrane. In epithelial cells, the heterodimer gE/gI is required for the cell-to-cell spread of the virus, by sorting nascent virions to cell junctions. Once the virus reaches the cell junctions, virus particles can spread to adjacent cells extremely rapidly through interactions with cellular receptors that accumulate at these junctions. Implicated in basolateral spread in polarized cells. In neuronal cells, gE/gI is essential for the anterograde spread of the infection throughout the host nervous system. Together with US9, the heterodimer gE/gI is involved in the sorting and transport of viral structural components toward axon tips. This is Envelope glycoprotein E (MDV096) from Gallus gallus (Chicken).